The primary structure comprises 669 residues: Acetyl-coenzyme A synthetase (669 aa).

CoA contacts are provided by residues 211 to 214 (RGGK) and T329. ATP contacts are provided by residues 404–406 (GEP), 428–433 (DTYWQT), D519, and R534. S542 provides a ligand contact to CoA. ATP is bound at residue R545. R602 contacts CoA.

This sequence belongs to the ATP-dependent AMP-binding enzyme family.

The catalysed reaction is acetate + ATP + CoA = acetyl-CoA + AMP + diphosphate. It functions in the pathway ketone degradation; acetoin degradation. Its pathway is antibiotic biosynthesis; penicillin biosynthesis. The chain is Acetyl-coenzyme A synthetase (facA) from Penicillium chrysogenum (Penicillium notatum).